Reading from the N-terminus, the 612-residue chain is Dihydroxy-acid dehydratase (612 aa).

Residue D81 coordinates Mg(2+). C122 is a binding site for [2Fe-2S] cluster. Mg(2+)-binding residues include D123 and K124. Position 124 is an N6-carboxylysine (K124). C193 is a [2Fe-2S] cluster binding site. E489 is a binding site for Mg(2+). The Proton acceptor role is filled by S515.

Belongs to the IlvD/Edd family. As to quaternary structure, homodimer. It depends on [2Fe-2S] cluster as a cofactor. Mg(2+) is required as a cofactor.

The catalysed reaction is (2R)-2,3-dihydroxy-3-methylbutanoate = 3-methyl-2-oxobutanoate + H2O. The enzyme catalyses (2R,3R)-2,3-dihydroxy-3-methylpentanoate = (S)-3-methyl-2-oxopentanoate + H2O. It functions in the pathway amino-acid biosynthesis; L-isoleucine biosynthesis; L-isoleucine from 2-oxobutanoate: step 3/4. Its pathway is amino-acid biosynthesis; L-valine biosynthesis; L-valine from pyruvate: step 3/4. Functions in the biosynthesis of branched-chain amino acids. Catalyzes the dehydration of (2R,3R)-2,3-dihydroxy-3-methylpentanoate (2,3-dihydroxy-3-methylvalerate) into 2-oxo-3-methylpentanoate (2-oxo-3-methylvalerate) and of (2R)-2,3-dihydroxy-3-methylbutanoate (2,3-dihydroxyisovalerate) into 2-oxo-3-methylbutanoate (2-oxoisovalerate), the penultimate precursor to L-isoleucine and L-valine, respectively. This chain is Dihydroxy-acid dehydratase, found in Pseudomonas paraeruginosa (strain DSM 24068 / PA7) (Pseudomonas aeruginosa (strain PA7)).